A 238-amino-acid polypeptide reads, in one-letter code: 3-dehydroquinate dehydratase (238 aa).

3-dehydroquinate contacts are provided by residues 35 to 37 and Arg70; that span reads ELR. His133 acts as the Proton donor/acceptor in catalysis. The active-site Schiff-base intermediate with substrate is Lys160. Arg202 and Gln225 together coordinate 3-dehydroquinate.

The protein belongs to the type-I 3-dehydroquinase family. In terms of assembly, homodimer.

The catalysed reaction is 3-dehydroquinate = 3-dehydroshikimate + H2O. The protein operates within metabolic intermediate biosynthesis; chorismate biosynthesis; chorismate from D-erythrose 4-phosphate and phosphoenolpyruvate: step 3/7. Involved in the third step of the chorismate pathway, which leads to the biosynthesis of aromatic amino acids. Catalyzes the cis-dehydration of 3-dehydroquinate (DHQ) and introduces the first double bond of the aromatic ring to yield 3-dehydroshikimate. This is 3-dehydroquinate dehydratase from Staphylococcus aureus (strain USA300).